The primary structure comprises 199 residues: UPF0637 protein LACR_1918 (199 aa).

This sequence belongs to the UPF0637 family.

In Lactococcus lactis subsp. cremoris (strain SK11), this protein is UPF0637 protein LACR_1918.